The sequence spans 673 residues: UvrABC system protein B (673 aa).

The 389-residue stretch at 26–414 (ANFEAGLAKQ…AGEITELVVR (389 aa)) folds into the Helicase ATP-binding domain. 39–46 (GVTGSGKT) provides a ligand contact to ATP. The short motif at 92–115 (YYDYYQPEAYVPSSDTFIEKDSSI) is the Beta-hairpin element. The Helicase C-terminal domain occupies 431 to 597 (QVDDLMSEVH…SVARPISDIM (167 aa)). The disordered stretch occupies residues 601–626 (REDAAEKKAGKGRSKSRQVAEEPADY). The UVR domain occupies 635–670 (AGKLKALEQKMYQHAKDLEFEAAAQIRDQILKLKAA).

Belongs to the UvrB family. As to quaternary structure, forms a heterotetramer with UvrA during the search for lesions. Interacts with UvrC in an incision complex.

Its subcellular location is the cytoplasm. The UvrABC repair system catalyzes the recognition and processing of DNA lesions. A damage recognition complex composed of 2 UvrA and 2 UvrB subunits scans DNA for abnormalities. Upon binding of the UvrA(2)B(2) complex to a putative damaged site, the DNA wraps around one UvrB monomer. DNA wrap is dependent on ATP binding by UvrB and probably causes local melting of the DNA helix, facilitating insertion of UvrB beta-hairpin between the DNA strands. Then UvrB probes one DNA strand for the presence of a lesion. If a lesion is found the UvrA subunits dissociate and the UvrB-DNA preincision complex is formed. This complex is subsequently bound by UvrC and the second UvrB is released. If no lesion is found, the DNA wraps around the other UvrB subunit that will check the other stand for damage. This Xanthomonas campestris pv. campestris (strain 8004) protein is UvrABC system protein B.